The primary structure comprises 286 residues: NAD kinase (286 aa).

D67 serves as the catalytic Proton acceptor. NAD(+) contacts are provided by residues 67–68 (DG), R72, 141–142 (ND), R152, D171, 182–187 (TAYSLS), and Q242.

Belongs to the NAD kinase family. A divalent metal cation is required as a cofactor.

Its subcellular location is the cytoplasm. The enzyme catalyses NAD(+) + ATP = ADP + NADP(+) + H(+). In terms of biological role, involved in the regulation of the intracellular balance of NAD and NADP, and is a key enzyme in the biosynthesis of NADP. Catalyzes specifically the phosphorylation on 2'-hydroxyl of the adenosine moiety of NAD to yield NADP. The protein is NAD kinase of Ruminiclostridium cellulolyticum (strain ATCC 35319 / DSM 5812 / JCM 6584 / H10) (Clostridium cellulolyticum).